The primary structure comprises 338 residues: Taste receptor type 2 member 39 (338 aa).

The Extracellular portion of the chain corresponds to 1–30; it reads MLGRCFPPDTKEKQQLRMTKLCDPAESELS. The chain crosses the membrane as a helical span at residues 31-51; sequence PFLITLILAVLLAEYLIGIIA. The Cytoplasmic segment spans residues 52-74; that stretch reads NGFIMAIHAAEWVQNKAVSTSGR. The helical transmembrane segment at 75 to 95 threads the bilayer; that stretch reads ILVFLSVSRIALQSLMMLEIT. Topologically, residues 96–116 are extracellular; the sequence is ISSTSLSFYSEDAVYYAFKIS. The chain crosses the membrane as a helical span at residues 117–137; the sequence is FIFLNFCSLWFAAWLSFFYFV. Residues 138–156 are Cytoplasmic-facing; the sequence is KIANFSYPLFLKLRWRITG. A helical membrane pass occupies residues 157-177; sequence LIPWLLWLSVFISFSHSMFCI. Over 178 to 205 the chain is Extracellular; that stretch reads NICTVYCNNSFPIHSSNSTKKTYLSEIN. Residues N185 and N194 are each glycosylated (N-linked (GlcNAc...) asparagine). The helical transmembrane segment at 206–226 threads the bilayer; that stretch reads VVGLAFFFNLGIVTPLIMFIL. Residues 227 to 262 lie on the Cytoplasmic side of the membrane; that stretch reads TATLLILSLKRHTLHMGSNATGSNDPSMEAHMGAIK. The helical transmembrane segment at 263–283 threads the bilayer; sequence AISYFLILYIFNAVALFIYLS. Residues 284 to 291 lie on the Extracellular side of the membrane; sequence NMFDINSL. Residues 292–312 traverse the membrane as a helical segment; sequence WNNLCQIIMAAYPASHSILLI. Residues 313 to 338 are Cytoplasmic-facing; that stretch reads QDNPGLRRAWKRLQLRLHLYPKEWTL.

This sequence belongs to the G-protein coupled receptor T2R family. As to expression, expressed in subsets of taste receptor cells of the tongue and exclusively in gustducin-positive cells.

It is found in the membrane. Functionally, receptor that may play a role in the perception of bitterness and is gustducin-linked. May play a role in sensing the chemical composition of the gastrointestinal content. The activity of this receptor may stimulate alpha gustducin, mediate PLC-beta-2 activation and lead to the gating of TRPM5. The sequence is that of Taste receptor type 2 member 39 (TAS2R39) from Homo sapiens (Human).